The sequence spans 58 residues: SPbeta prophage-derived uncharacterized protein YotN (58 aa).

In Bacillus subtilis (strain 168), this protein is SPbeta prophage-derived uncharacterized protein YotN (yotN).